A 238-amino-acid polypeptide reads, in one-letter code: Putative tyrosine-protein phosphatase OCA1 (238 aa).

Residues 1–43 form a disordered region; it reads MTSKVGEYEDVPEDESRLTEENVSVPEEEVEDEDEEEDDDDDH. At threonine 2 the chain carries N-acetylthreonine. Residue serine 24 is modified to Phosphoserine. The span at 26 to 42 shows a compositional bias: acidic residues; the sequence is PEEEVEDEDEEEDDDDD. One can recognise a Tyrosine-protein phosphatase domain in the interval 72 to 230; sequence NFCPVERYLY…LVKIDKNKAP (159 aa). Cysteine 168 acts as the Phosphocysteine intermediate in catalysis.

This sequence belongs to the protein-tyrosine phosphatase family.

Its subcellular location is the cytoplasm. It catalyses the reaction O-phospho-L-tyrosyl-[protein] + H2O = L-tyrosyl-[protein] + phosphate. Its function is as follows. Putative tyrosine-protein phosphatase required for protection against superoxide stress. Involved in cell-cycle delay in response to linoleic acid hydroperoxide (LoaOOH). This is Putative tyrosine-protein phosphatase OCA1 (OCA1) from Saccharomyces cerevisiae (strain YJM789) (Baker's yeast).